Here is a 360-residue protein sequence, read N- to C-terminus: S-adenosylmethionine:tRNA ribosyltransferase-isomerase (360 aa).

The protein belongs to the QueA family. In terms of assembly, monomer.

It is found in the cytoplasm. The enzyme catalyses 7-aminomethyl-7-carbaguanosine(34) in tRNA + S-adenosyl-L-methionine = epoxyqueuosine(34) in tRNA + adenine + L-methionine + 2 H(+). It participates in tRNA modification; tRNA-queuosine biosynthesis. Functionally, transfers and isomerizes the ribose moiety from AdoMet to the 7-aminomethyl group of 7-deazaguanine (preQ1-tRNA) to give epoxyqueuosine (oQ-tRNA). The protein is S-adenosylmethionine:tRNA ribosyltransferase-isomerase of Rhizobium meliloti (strain 1021) (Ensifer meliloti).